The primary structure comprises 129 residues: Follitropin subunit beta (129 aa).

Positions 1-20 (MKSVQLCFLFCCWRAICCKS) are cleaved as a signal peptide. 6 disulfide bridges follow: Cys-21/Cys-69, Cys-35/Cys-84, Cys-38/Cys-122, Cys-46/Cys-100, Cys-50/Cys-102, and Cys-105/Cys-112. 2 N-linked (GlcNAc...) asparagine glycosylation sites follow: Asn-25 and Asn-42.

It belongs to the glycoprotein hormones subunit beta family. In terms of assembly, heterodimer. The active follitropin is a heterodimer composed of an alpha chain/CGA shared with other hormones and a unique beta chain/FSHB shown here.

It is found in the secreted. Functionally, together with the alpha chain CGA constitutes follitropin, the follicle-stimulating hormone, and provides its biological specificity to the hormone heterodimer. Binds FSHR, a G protein-coupled receptor, on target cells to activate downstream signaling pathways. Follitropin is involved in follicle development and spermatogenesis in reproductive organs. The chain is Follitropin subunit beta (FSHB) from Ailuropoda melanoleuca (Giant panda).